Reading from the N-terminus, the 161-residue chain is Disulfide bond formation protein B (161 aa).

Residues 1 to 8 (MQANSRTY) lie on the Cytoplasmic side of the membrane. A helical transmembrane segment spans residues 9 to 25 (FLLIAIVSFAMVGAALY). The Periplasmic portion of the chain corresponds to 26–43 (MQYAENLQPCPLCIMQRF). A disulfide bridge connects residues Cys35 and Cys38. The helical transmembrane segment at 44-58 (AFIGIGIFSLLAVIA) threads the bilayer. At 59–63 (QNTRT) the chain is on the cytoplasmic side. The chain crosses the membrane as a helical span at residues 64–81 (LWQGLGMLSGVGGIAVAG). The Periplasmic segment spans residues 82–136 (YQVALLMNPKASCGIDPLENWVNSLPTAKLLPQVFYSDGLCTAPTPPILGLSIPA). Cysteines 94 and 122 form a disulfide. The helical transmembrane segment at 137 to 155 (WSLIWLLILTLTLAVGLIR) threads the bilayer. Over 156–161 (REKHFR) the chain is Cytoplasmic.

The protein belongs to the DsbB family.

It is found in the cell inner membrane. Required for disulfide bond formation in some periplasmic proteins. Acts by oxidizing the DsbA protein. The protein is Disulfide bond formation protein B of Cupriavidus metallidurans (strain ATCC 43123 / DSM 2839 / NBRC 102507 / CH34) (Ralstonia metallidurans).